The sequence spans 1062 residues: 3-hydroxy-3-methylglutaryl-coenzyme A reductase 2 (1062 aa).

Topologically, residues Met1–Pro34 are cytoplasmic. A helical transmembrane segment spans residues Ile35 to Gly55. Residues Ser56 to Gln230 are Lumenal-facing. N-linked (GlcNAc...) asparagine glycosylation occurs at Asn61. A helical transmembrane segment spans residues Ile231–Leu251. In terms of domain architecture, SSD spans Asp233–Val403. Over Phe252–Arg261 the chain is Cytoplasmic. Residues Phe262–Val282 traverse the membrane as a helical segment. The Lumenal segment spans residues Thr283–Gly287. Residues Val288–Phe308 traverse the membrane as a helical segment. The Cytoplasmic portion of the chain corresponds to Glu309–Asp355. The chain crosses the membrane as a helical span at residues Tyr356–Leu375. At Pro376 to Gln377 the chain is on the lumenal side. Residues Phe378–Ile398 traverse the membrane as a helical segment. Residues Ser399–Lys450 lie on the Cytoplasmic side of the membrane. The chain crosses the membrane as a helical span at residues Phe451–Gly471. At Asn472–Pro564 the chain is on the lumenal side. The N-linked (GlcNAc...) asparagine glycan is linked to Asn484. Residues Val565 to Met585 traverse the membrane as a helical segment. The Cytoplasmic portion of the chain corresponds to Lys586–Gly1062. Glu744 (charge relay system) is an active-site residue. Residue Ser750–Lys756 coordinates CoA. NADP(+) is bound by residues Ser811–Phe813 and Asp838–Ser846. Residue Lys877 is the Charge relay system of the active site. Val906–Lys908 is a binding site for CoA. Asp953 (charge relay system) is an active-site residue. Position 1048 to 1049 (Ala1048 to His1049) interacts with CoA. The active-site Proton donor is the His1049. Asn1053–Arg1054 is an NADP(+) binding site.

This sequence belongs to the HMG-CoA reductase family.

Its subcellular location is the endoplasmic reticulum membrane. The enzyme catalyses (R)-mevalonate + 2 NADP(+) + CoA = (3S)-3-hydroxy-3-methylglutaryl-CoA + 2 NADPH + 2 H(+). It participates in metabolic intermediate biosynthesis; (R)-mevalonate biosynthesis; (R)-mevalonate from acetyl-CoA: step 3/3. In terms of biological role, HMG-CoA reductase; part of the first module of ergosterol biosynthesis pathway that includes the early steps of the pathway, conserved across all eukaryotes, and which results in the formation of mevalonate from acetyl-coenzyme A (acetyl-CoA). Hmg1 and hmg2 catalyze the reduction of hydroxymethylglutaryl-CoA (HMG-CoA) to mevalonate. The first module starts with the action of the cytosolic acetyl-CoA acetyltransferase erg10B that catalyzes the formation of acetoacetyl-CoA. The hydroxymethylglutaryl-CoA synthases erg13A and erg13B then condense acetyl-CoA with acetoacetyl-CoA to form HMG-CoA. The rate-limiting step of the early module is the reduction to mevalonate by the 3-hydroxy-3-methylglutaryl-coenzyme A (HMG-CoA) reductases hmg1 and hmg2. Mevalonate is also a precursor for the extracellular siderophore triacetylfusarinine C (TAFC). The polypeptide is 3-hydroxy-3-methylglutaryl-coenzyme A reductase 2 (Aspergillus fumigatus (strain ATCC MYA-4609 / CBS 101355 / FGSC A1100 / Af293) (Neosartorya fumigata)).